Consider the following 232-residue polypeptide: Phosphatidylserine decarboxylase proenzyme (232 aa).

Ser190 acts as the Schiff-base intermediate with substrate; via pyruvic acid in catalysis. Residue Ser190 is modified to Pyruvic acid (Ser); by autocatalysis.

It belongs to the phosphatidylserine decarboxylase family. PSD-A subfamily. As to quaternary structure, heterodimer of a large membrane-associated beta subunit and a small pyruvoyl-containing alpha subunit. It depends on pyruvate as a cofactor. Is synthesized initially as an inactive proenzyme. Formation of the active enzyme involves a self-maturation process in which the active site pyruvoyl group is generated from an internal serine residue via an autocatalytic post-translational modification. Two non-identical subunits are generated from the proenzyme in this reaction, and the pyruvate is formed at the N-terminus of the alpha chain, which is derived from the carboxyl end of the proenzyme. The post-translation cleavage follows an unusual pathway, termed non-hydrolytic serinolysis, in which the side chain hydroxyl group of the serine supplies its oxygen atom to form the C-terminus of the beta chain, while the remainder of the serine residue undergoes an oxidative deamination to produce ammonia and the pyruvoyl prosthetic group on the alpha chain.

The protein localises to the cell membrane. The catalysed reaction is a 1,2-diacyl-sn-glycero-3-phospho-L-serine + H(+) = a 1,2-diacyl-sn-glycero-3-phosphoethanolamine + CO2. Its pathway is phospholipid metabolism; phosphatidylethanolamine biosynthesis; phosphatidylethanolamine from CDP-diacylglycerol: step 2/2. Catalyzes the formation of phosphatidylethanolamine (PtdEtn) from phosphatidylserine (PtdSer). The polypeptide is Phosphatidylserine decarboxylase proenzyme (Brucella canis (strain ATCC 23365 / NCTC 10854 / RM-666)).